A 405-amino-acid chain; its full sequence is Cytoplasmic tRNA 2-thiolation protein 2 (405 aa).

Belongs to the CTU2/NCS2 family.

The protein localises to the cytoplasm. The protein operates within tRNA modification; 5-methoxycarbonylmethyl-2-thiouridine-tRNA biosynthesis. In terms of biological role, plays a central role in 2-thiolation of mcm(5)S(2)U at tRNA wobble positions of tRNA(Lys), tRNA(Glu) and tRNA(Gln). May act by forming a heterodimer with NCS6/CTU1 that ligates sulfur from thiocarboxylated URM1 onto the uridine of tRNAs at wobble position. The chain is Cytoplasmic tRNA 2-thiolation protein 2 from Drosophila simulans (Fruit fly).